The following is a 287-amino-acid chain: Shikimate kinase (287 aa).

Position 87–97 (87–97 (PLASGLKSSSA)) interacts with ATP.

Belongs to the GHMP kinase family. Archaeal shikimate kinase subfamily.

It localises to the cytoplasm. The catalysed reaction is shikimate + ATP = 3-phosphoshikimate + ADP + H(+). Its pathway is metabolic intermediate biosynthesis; chorismate biosynthesis; chorismate from D-erythrose 4-phosphate and phosphoenolpyruvate: step 5/7. This Methanococcoides burtonii (strain DSM 6242 / NBRC 107633 / OCM 468 / ACE-M) protein is Shikimate kinase.